The primary structure comprises 278 residues: Small ribosomal subunit protein uS3 (278 aa).

The region spanning 39-107 (VRDFLKKRLA…PVHVNIEEVR (69 aa)) is the KH type-2 domain. Positions 217 to 278 (VENENEARRG…DAAAVEKEVS (62 aa)) are disordered. Residues 230–239 (PRNDAGDNRG) are compositionally biased toward basic and acidic residues.

The protein belongs to the universal ribosomal protein uS3 family. In terms of assembly, part of the 30S ribosomal subunit. Forms a tight complex with proteins S10 and S14.

In terms of biological role, binds the lower part of the 30S subunit head. Binds mRNA in the 70S ribosome, positioning it for translation. The protein is Small ribosomal subunit protein uS3 of Aromatoleum aromaticum (strain DSM 19018 / LMG 30748 / EbN1) (Azoarcus sp. (strain EbN1)).